We begin with the raw amino-acid sequence, 584 residues long: Insulin-like growth factor 2 mRNA-binding protein 3 (584 aa).

RRM domains follow at residues 2-75 (NKLY…HSVP) and 81-156 (RKLQ…YIPD). The interval 160 to 199 (AQQPPQQHPQGRRGFGQRGPPRQGSPSATTRQKPQSDVPL) is disordered. Residues 184–194 (SPSATTRQKPQ) are compositionally biased toward polar residues. 4 KH domains span residues 196-261 (DVPL…CKII), 277-344 (EIPL…EEEI), 409-474 (SETV…QGRI), and 491-557 (KLEA…QRKI).

Belongs to the RRM IMP/VICKZ family. In terms of assembly, homodimer and multimer.

Its subcellular location is the cytoplasm. The protein localises to the nucleus. It is found in the P-body. It localises to the stress granule. Its function is as follows. RNA-binding factor that may recruit target transcripts to cytoplasmic protein-RNA complexes (mRNPs). This transcript 'caging' into mRNPs allows mRNA transport and transient storage. It also modulates the rate and location at which target transcripts encounter the translational apparatus and shields them from endonuclease attacks or microRNA-mediated degradation. Preferentially binds to N6-methyladenosine (m6A)-containing mRNAs and increases their stability. This Gallus gallus (Chicken) protein is Insulin-like growth factor 2 mRNA-binding protein 3 (IGF2BP3).